The sequence spans 106 residues: Iron-sulfur cluster assembly protein CyaY (106 aa).

This sequence belongs to the frataxin family.

In terms of biological role, involved in iron-sulfur (Fe-S) cluster assembly. May act as a regulator of Fe-S biogenesis. This Klebsiella pneumoniae subsp. pneumoniae (strain ATCC 700721 / MGH 78578) protein is Iron-sulfur cluster assembly protein CyaY.